The primary structure comprises 179 residues: UPF0227 protein Sbal195_2522 (179 aa).

Belongs to the UPF0227 family.

This chain is UPF0227 protein Sbal195_2522, found in Shewanella baltica (strain OS195).